The sequence spans 509 residues: Maturase K (509 aa).

This sequence belongs to the intron maturase 2 family. MatK subfamily.

The protein resides in the plastid. It localises to the chloroplast. Functionally, usually encoded in the trnK tRNA gene intron. Probably assists in splicing its own and other chloroplast group II introns. In Eucommia ulmoides (Hardy rubber tree), this protein is Maturase K.